We begin with the raw amino-acid sequence, 261 residues long: Single-strand annealing weakened protein 1 (261 aa).

As to quaternary structure, interacts with MSH2, MSH3, RAD1, RAD10, RAD51 and RAD52.

Its subcellular location is the nucleus. In terms of biological role, catalyzes 3'-non-homologous tail removal of RAD1/RAD10-dependent single-strand annealing recombination intermediates. Plays a key role in targeting RAD1/RAD10 complex to 3'-flap cleavage substrate in recombination. Also contributes to the integrity of ribosomal DNA arrays. The protein is Single-strand annealing weakened protein 1 (SAW1) of Saccharomyces cerevisiae (strain ATCC 204508 / S288c) (Baker's yeast).